The primary structure comprises 191 residues: Cyclin-dependent kinase inhibitor 1 (191 aa).

The tract at residues L62–R81 is disordered. Residues Q162–E191 form a required for inhibitory function and interaction with CDK kinase complexes region.

The protein belongs to the CDI family. ICK/KRP subfamily. In terms of assembly, specifically interacts with CDKA-1, but not with CDKB1-1. Interacts with CYCD2-1 and CYCD3-1. Ubiquitinated independently by RKP and SCF (SKP1-CUL1-FBL5/SKP2B) protein ligase complex, leading to proteasomal degradation. Expressed at low levels in roots, stems, leaves and flowers.

The protein resides in the nucleus. It is found in the nucleoplasm. Its function is as follows. Binds and inhibits CYCD2-1/CDKA-1 kinase complex activity. Regulates cell division which is crucial for plant growth, development and morphogenesis. Functions in turning cells from a mitotic to an endoreplicating cell cycle mode. Acts cell- and non-cell-autonomously to regulate endoreduplication by allowing S phase progression, but blocking entry into mitosis. Keeps on the one hand the plant cell cycle locally controlled, and on the other hand provides a possibility of linking cell cycle control in single cells with the supracellular organization of a tissue or an organ. May target specifically CDKA-1. The chain is Cyclin-dependent kinase inhibitor 1 (KRP1) from Arabidopsis thaliana (Mouse-ear cress).